The sequence spans 343 residues: 2-alkenal reductase (NADP(+)-dependent) (343 aa).

2 residues coordinate substrate: Tyr55 and Tyr80. Residues 165–166, Gly186, Lys190, Tyr206, Asn230, Cys252, Tyr258, 282–284, and Asn332 each bind NADP(+); these read AV and FLV.

It belongs to the NADP-dependent oxidoreductase L4BD family. In terms of assembly, homodimer.

The catalysed reaction is an n-alkanal + NADP(+) = an alk-2-enal + NADPH + H(+). In terms of biological role, reduces the C=C double bonds of alpha, beta unsaturated enones, but has no activity on enones with an endocyclic C=C double-bond. Shows a high specificity for NADPH as the hybrid donor. Substrates are 1-nitrocyclohexene, 2-methylpentenal, trans-cinnamaldehyde, methyl-trans-2-methylcinnamaldehyde, trans-2-nonenal and 1-octen-3-one. Reduced activity with aplha-methyl transcinnamaldehyde, 1-cyclohexene-1-carboxaldehyde, methyl crotonate, (R)-pulegone, and dimethyl itaconate and no activity with maleimides, citral, (5R)- or (5S)-carvone, (S)-perillyl alcohol, and substituted cyclohexenones and cyclopentenones. May also act as a allyl-alcohol dehydrogenase by catalyzing the dehydrogenation of secondary allylic alcohols rather than saturated secondary alcohols. Allyl-alcohol dehydrogenase is specific for the S-stereoisomer of the alcohols. This Nicotiana tabacum (Common tobacco) protein is 2-alkenal reductase (NADP(+)-dependent) (DBR).